Consider the following 406-residue polypeptide: MTVLYDEIMVRYGELSTKGKNRGYFINRLAKNIREVLADMPELKITAVRDRAHIELNGADYAEVSNRLTKVFGIQNFSPSIKVEKSMPIIKKEVVALFKEIYSEGQTFKIATRRADHNFELDSTELNIALGDVVFDNFSYAKVQMKKPDITLRVEIRQDATYLSFEDIKGAGGMPVGTAGRGHLMLSGGIDSPVAGYLALKRGVEIEAVHFASPPYTSPGALKKAKDLAAKLTVFGGAITFIEVPFTEIQEEIKAKAPQAYLMTITRRFMMRVVDRVREERGGKVIINGESLGQVASQTLGSMSAINEVTNTPVIRPVVTMDKNEIIEIAEKIDTFNLSILPFEDCCTVFAPPSPKTNPKLENCIQYEKRMDVEGMVDRAVKGIMLTTIAGENWDQTEEEEFADFL.

A THUMP domain is found at 62–167; the sequence is AEVSNRLTKV…QDATYLSFED (106 aa). ATP is bound by residues 185–186, 210–211, Arg-267, Gly-289, and Gln-298; these read ML and HF.

The protein belongs to the ThiI family.

The protein localises to the cytoplasm. It carries out the reaction [ThiI sulfur-carrier protein]-S-sulfanyl-L-cysteine + a uridine in tRNA + 2 reduced [2Fe-2S]-[ferredoxin] + ATP + H(+) = [ThiI sulfur-carrier protein]-L-cysteine + a 4-thiouridine in tRNA + 2 oxidized [2Fe-2S]-[ferredoxin] + AMP + diphosphate. It catalyses the reaction [ThiS sulfur-carrier protein]-C-terminal Gly-Gly-AMP + S-sulfanyl-L-cysteinyl-[cysteine desulfurase] + AH2 = [ThiS sulfur-carrier protein]-C-terminal-Gly-aminoethanethioate + L-cysteinyl-[cysteine desulfurase] + A + AMP + 2 H(+). Its pathway is cofactor biosynthesis; thiamine diphosphate biosynthesis. In terms of biological role, catalyzes the ATP-dependent transfer of a sulfur to tRNA to produce 4-thiouridine in position 8 of tRNAs, which functions as a near-UV photosensor. Also catalyzes the transfer of sulfur to the sulfur carrier protein ThiS, forming ThiS-thiocarboxylate. This is a step in the synthesis of thiazole, in the thiamine biosynthesis pathway. The sulfur is donated as persulfide by IscS. This is Probable tRNA sulfurtransferase from Lactococcus lactis subsp. cremoris (strain MG1363).